A 126-amino-acid polypeptide reads, in one-letter code: MARITTEDCSKVIPDRFQLVIYATRYAKLLNYKVETNQSKKEKRDKPPVIALRRIASGKVSVAQLEQDFINSLRTRSRIEPIVEQDESEDLEEKFEYLPEVYIGEDYSDLDDQIFTEETGEDFEDK.

This sequence belongs to the RNA polymerase subunit omega family. The RNAP catalytic core consists of 2 alpha, 1 beta, 1 beta' and 1 omega subunit. When a sigma factor is associated with the core the holoenzyme is formed, which can initiate transcription.

It carries out the reaction RNA(n) + a ribonucleoside 5'-triphosphate = RNA(n+1) + diphosphate. Its function is as follows. Promotes RNA polymerase assembly. Latches the N- and C-terminal regions of the beta' subunit thereby facilitating its interaction with the beta and alpha subunits. In Rickettsia bellii (strain OSU 85-389), this protein is DNA-directed RNA polymerase subunit omega.